The chain runs to 231 residues: uncharacterized protein (231 aa).

6 helical membrane-spanning segments follow: residues 4-24 (YIIY…LQIS), 29-49 (SMIF…LVIG), 58-78 (AGNA…ALPL), 95-115 (TVVI…LLLG), 147-167 (VTAV…YLVL), and 211-231 (LCGI…YFFV).

Belongs to the YohK (E.coli)/YwbG (IPA-22R) (B.subtilis) family.

Its subcellular location is the cell membrane. This is an uncharacterized protein from Haemophilus influenzae (strain ATCC 51907 / DSM 11121 / KW20 / Rd).